Reading from the N-terminus, the 450-residue chain is tRNA modification GTPase MnmE (450 aa).

(6S)-5-formyl-5,6,7,8-tetrahydrofolate contacts are provided by arginine 25, glutamate 86, and arginine 126. A TrmE-type G domain is found at 221–373 (GLRVALVGRP…LVQALLERCG (153 aa)). K(+) is bound at residue asparagine 231. Residues 231–236 (NVGKSS), 250–256 (TELPGTT), 275–278 (DTAG), and 336–339 (NKAD) contribute to the GTP site. A Mg(2+)-binding site is contributed by serine 235. Positions 250, 252, and 255 each coordinate K(+). Position 256 (threonine 256) interacts with Mg(2+). Lysine 450 lines the (6S)-5-formyl-5,6,7,8-tetrahydrofolate pocket.

This sequence belongs to the TRAFAC class TrmE-Era-EngA-EngB-Septin-like GTPase superfamily. TrmE GTPase family. In terms of assembly, homodimer. Heterotetramer of two MnmE and two MnmG subunits. The cofactor is K(+).

The protein localises to the cytoplasm. Its function is as follows. Exhibits a very high intrinsic GTPase hydrolysis rate. Involved in the addition of a carboxymethylaminomethyl (cmnm) group at the wobble position (U34) of certain tRNAs, forming tRNA-cmnm(5)s(2)U34. The sequence is that of tRNA modification GTPase MnmE from Parasynechococcus marenigrum (strain WH8102).